The chain runs to 397 residues: Galactokinase (397 aa).

Residues 1–27 (MGEAVGEPSASGSGSCTGRSRRGCGRR) are disordered. A compositionally biased stretch (low complexity) spans 9-18 (SASGSGSCTG). 36 to 39 (EHTD) lines the substrate pocket. Residues S69 and 124-130 (GAGLSSS) each bind ATP. Residues S130 and E161 each contribute to the Mg(2+) site. Residue D173 is the Proton acceptor of the active site. Y225 is a substrate binding site.

The protein belongs to the GHMP kinase family. GalK subfamily.

The protein localises to the cytoplasm. It catalyses the reaction alpha-D-galactose + ATP = alpha-D-galactose 1-phosphate + ADP + H(+). It functions in the pathway carbohydrate metabolism; galactose metabolism. Functionally, catalyzes the transfer of the gamma-phosphate of ATP to D-galactose to form alpha-D-galactose-1-phosphate (Gal-1-P). In Streptomyces lividans, this protein is Galactokinase.